Reading from the N-terminus, the 202-residue chain is FMN-dependent NADH:quinone oxidoreductase 2 (202 aa).

FMN is bound by residues Ser-9, 15-17 (SVS), 93-96 (MYNF), and 137-140 (SRGG).

This sequence belongs to the azoreductase type 1 family. As to quaternary structure, homodimer. The cofactor is FMN.

It carries out the reaction 2 a quinone + NADH + H(+) = 2 a 1,4-benzosemiquinone + NAD(+). The catalysed reaction is N,N-dimethyl-1,4-phenylenediamine + anthranilate + 2 NAD(+) = 2-(4-dimethylaminophenyl)diazenylbenzoate + 2 NADH + 2 H(+). Its function is as follows. Quinone reductase that provides resistance to thiol-specific stress caused by electrophilic quinones. Also exhibits azoreductase activity. Catalyzes the reductive cleavage of the azo bond in aromatic azo compounds to the corresponding amines. This chain is FMN-dependent NADH:quinone oxidoreductase 2, found in Bradyrhizobium diazoefficiens (strain JCM 10833 / BCRC 13528 / IAM 13628 / NBRC 14792 / USDA 110).